A 494-amino-acid chain; its full sequence is Cytochrome c-552 (494 aa).

An N-terminal signal peptide occupies residues Met-1–Val-31. His-116 is a binding site for heme c. Cys-144, Cys-147, and Lys-148 together coordinate heme. Heme c is bound by residues Cys-182, Cys-185, His-186, Cys-224, Cys-227, and His-228. Residues Glu-230, Tyr-231, Lys-276, and Gln-278 each coordinate Ca(2+). Tyr-231 is a binding site for substrate. A substrate-binding site is contributed by His-279. Residues His-290, Cys-297, Cys-300, His-301, His-315, Cys-328, Cys-331, His-332, and His-407 each coordinate heme c.

It belongs to the cytochrome c-552 family. Ca(2+) serves as cofactor. It depends on heme c as a cofactor.

It localises to the periplasm. It carries out the reaction 6 Fe(III)-[cytochrome c] + NH4(+) + 2 H2O = 6 Fe(II)-[cytochrome c] + nitrite + 8 H(+). It functions in the pathway nitrogen metabolism; nitrate reduction (assimilation). Functionally, catalyzes the reduction of nitrite to ammonia, consuming six electrons in the process. This is Cytochrome c-552 from Parabacteroides distasonis (strain ATCC 8503 / DSM 20701 / CIP 104284 / JCM 5825 / NCTC 11152).